We begin with the raw amino-acid sequence, 421 residues long: MHKLLKLAAMGTAACALLAGMAPVANAQEKQNVEVLHWWTSGGEASALEVLKKDLESKGISWTDMPVAGGGGTEAMTVLRARVTAGNAPTAVQMLGFDIRDWAEQGALGNLDTVASKEGWEKVIPAPLQEFAKYDGHWIAAPVNIHSTNWMWINKAALDKAGGKEPTNWDELIALLDNFKAQGITPIAHGGQPWQDATIFDAVVLSFGPDFYKKAFIDLDPEALGSDTMKQAFDRMSKLRTYVDDNFSGRDWNLASAMVIEGKAGVQFMGDWAKGEFLKAGKKPGEDFVCMRYPGTQGAVTFNSDMFAMFKVSEDKVPAQLEMASAIESPAFQSAFNVVKGSAPARTDVPDTAFDACGKKAIADVKEANSKGTLLGSMAHGYANPAAVKNAIYDVVTRQFNGQLSSEDAVKELVVAVEAAK.

The signal sequence occupies residues 1–27 (MHKLLKLAAMGTAACALLAGMAPVANA).

The protein belongs to the bacterial solute-binding protein 1 family.

The protein resides in the periplasm. Functionally, part of a binding-protein-dependent transport system for a sugar. The sequence is that of Probable sugar-binding periplasmic protein from Brucella melitensis biotype 1 (strain ATCC 23456 / CCUG 17765 / NCTC 10094 / 16M).